Reading from the N-terminus, the 466-residue chain is Zinc finger protein ZIC 3 (466 aa).

The span at 65–80 shows a compositional bias: polar residues; sequence DLSSGQSSAFTPQGSG. The tract at residues 65-103 is disordered; the sequence is DLSSGQSSAFTPQGSGYANALGHHHHHHHHHHASQVPTY. A compositionally biased stretch (basic residues) spans 86–97; the sequence is GHHHHHHHHHHA. A Glycyl lysine isopeptide (Lys-Gly) (interchain with G-Cter in SUMO2) cross-link involves residue lysine 247. The C2H2-type 1; atypical zinc-finger motif lies at 250 to 285; the sequence is LSCKWIEEAQLSRPKKSCDRTFSTMHELVTHVTMEH. Residues 294–321 form a C2H2-type 2; atypical zinc finger; that stretch reads HVCYWEECPREGKSFKAKYKLVNHIRVH. Short sequence motifs (nuclear localization signal) lie at residues 296 to 321 and 329 to 351; these read CYWE…IRVH and CPFP…KRTH. 3 C2H2-type zinc fingers span residues 327–351, 357–381, and 387–409; these read FPCP…KRTH, FKCE…MHVH, and YICK…MKVH. Residues 403 to 466 are disordered; sequence RKHMKVHESQ…LPPNFNEWYV (64 aa). Positions 411 to 427 are enriched in low complexity; that stretch reads SQGSDSSPAASSGYESS. The span at 434 to 454 shows a compositional bias: polar residues; the sequence is SANSKDTTKTPSAVQTSTSHN.

Belongs to the GLI C2H2-type zinc-finger protein family. As to quaternary structure, interacts with KPNA1 and KPNA6. Interacts (via C2H2-type domains 3, 4 and 5) with GLI3; the interaction enhances its transcriptional activity. Interacts (via the C2H2-type domains 3, 4 and 5) with MDFIC (via the C2H2-type domains 3, 4 and 5); the interaction reduces its transcriptional activity. As to expression, CNS. A high level expression is seen in the cerebellum.

It localises to the nucleus. It is found in the cytoplasm. Acts as a transcriptional activator. Required in the earliest stages in both axial midline development and left-right (LR) asymmetry specification. Binds to the minimal GLI-consensus sequence 5'-GGGTGGTC-3'. In Mus musculus (Mouse), this protein is Zinc finger protein ZIC 3 (Zic3).